The primary structure comprises 169 residues: Chorismate pyruvate-lyase (169 aa).

Residues methionine 37, arginine 79, leucine 117, and glutamate 158 each coordinate substrate.

The protein belongs to the UbiC family. In terms of assembly, monomer.

The protein localises to the cytoplasm. The enzyme catalyses chorismate = 4-hydroxybenzoate + pyruvate. It participates in cofactor biosynthesis; ubiquinone biosynthesis. In terms of biological role, removes the pyruvyl group from chorismate, with concomitant aromatization of the ring, to provide 4-hydroxybenzoate (4HB) for the ubiquinone pathway. The polypeptide is Chorismate pyruvate-lyase (Proteus mirabilis (strain HI4320)).